The following is a 520-amino-acid chain: MSTGPPSGISLVSMTTPRKSGQHTPESWSKWTHPSIEPLFTKRVMKPLPSWTGAFSLVSEFFTHEHQVFPCFNAPAFMCLLGQQYSVECTESPAWWVSLNSVLAIAQRRRAEAAQSAEAEDLAWAYASNALAGTWDILMRSTQLSSVQALLAIAWFFIGTPNPQPSFMLVGCAVRLAHSIGIHVESQDPSISPAEANLRKKVFWIAICLDQELCLRTGRSPCHDLNAGYVDPPMDSLDETEITKTVDGHELNLFQSQIQLAVIQGAIYRDLHSGKAPPNCIADSVADLLQKLENWRIEFAPTLTHDSTVRCEHHGLMRLYLSYYNAVIVVSRAHSLAYWVSPNHPAFSALPSSMRDSIENCLNASRCIIELSKLIPVTWRSFHWDIISILMSAVVILCIMAIRNPMNELATNDMGSVGDVLHIFKTLDEAYGNTYLTQVQKVCEKLYRKAHYAMQSSNAQPVESVDVVSPALEDSSNANQQQARHTDSTLEFNPNAFEQTMPYPLPMGWDLDTFLWTPTI.

The disordered stretch occupies residues 1–30 (MSTGPPSGISLVSMTTPRKSGQHTPESWSK).

The protein localises to the nucleus. Its function is as follows. Transcription factor that regulates the expression of the gene cluster that mediates the biosynthesis of fusaridione A. The protein is Fusaridione A cluster transcription factor fsdR of Fusarium heterosporum.